The primary structure comprises 105 residues: UPF0148 protein PH0795 (105 aa).

The protein belongs to the UPF0148 family.

This chain is UPF0148 protein PH0795, found in Pyrococcus horikoshii (strain ATCC 700860 / DSM 12428 / JCM 9974 / NBRC 100139 / OT-3).